The chain runs to 121 residues: Protein yippee (121 aa).

The Yippee domain occupies 13-110; sequence KLFNCAQCHT…LEYALITEAE (98 aa). Cys-17, Cys-20, Cys-73, and Cys-76 together coordinate Zn(2+).

The protein belongs to the yippee family. As to quaternary structure, interacts with hemolin.

This chain is Protein yippee, found in Drosophila melanogaster (Fruit fly).